A 306-amino-acid polypeptide reads, in one-letter code: Abnormal cell migration protein 21 (306 aa).

2 TSP type-1 domains span residues P55 to S102 and F109 to P155. C-linked (Man) tryptophan glycosylation is found at W58 and W61. Cystine bridges form between C121–C149, C123–C154, and C134–C139. The helical transmembrane segment at C240–L260 threads the bilayer.

In terms of processing, glycosylated via C-mannosylation by dpy-19 at Trp-58 and Trp-61.

The protein localises to the membrane. Functionally, required for determination of left/right asymmetry in nervous system. Acts together with unc-40 to control an initial left-right asymmetric polarization of the Q neuroblasts. Mig-21 and unc-40 may control the asymmetry in Wnt signaling response by restricting posterior polarization to one of the 2 Q neuroblasts. Involved in left-side QL posterior migration. In right-side QR, unc-40 and mig-21 pathways mutually inhibit each other in posterior migration, allowing anterior QR migration. In Caenorhabditis elegans, this protein is Abnormal cell migration protein 21 (mig-21).